The primary structure comprises 305 residues: GTPase Era (305 aa).

Residues 11 to 181 (RSGFVSFVGR…IKVMTDLLPE (171 aa)) enclose the Era-type G domain. Residues 19 to 26 (GRPNTGKS) form a G1 region. Residue 19–26 (GRPNTGKS) participates in GTP binding. The tract at residues 45-49 (ETTRH) is G2. The interval 66–69 (DTPG) is G3. Residues 66–70 (DTPGL) and 130–133 (TKAD) each bind GTP. The G4 stretch occupies residues 130–133 (TKAD). Positions 160–162 (VSS) are G5. In terms of domain architecture, KH type-2 spans 212–291 (LKNELPHSVA…FLDLRIKVLK (80 aa)).

It belongs to the TRAFAC class TrmE-Era-EngA-EngB-Septin-like GTPase superfamily. Era GTPase family. In terms of assembly, monomer.

Its subcellular location is the cytoplasm. The protein localises to the cell membrane. An essential GTPase that binds both GDP and GTP, with rapid nucleotide exchange. Plays a role in 16S rRNA processing and 30S ribosomal subunit biogenesis and possibly also in cell cycle regulation and energy metabolism. This Corynebacterium glutamicum (strain ATCC 13032 / DSM 20300 / JCM 1318 / BCRC 11384 / CCUG 27702 / LMG 3730 / NBRC 12168 / NCIMB 10025 / NRRL B-2784 / 534) protein is GTPase Era.